The sequence spans 489 residues: Lysine--tRNA ligase (489 aa).

Residues E399 and E406 each coordinate Mg(2+).

It belongs to the class-II aminoacyl-tRNA synthetase family. As to quaternary structure, homodimer. Requires Mg(2+) as cofactor.

Its subcellular location is the cytoplasm. It carries out the reaction tRNA(Lys) + L-lysine + ATP = L-lysyl-tRNA(Lys) + AMP + diphosphate. The sequence is that of Lysine--tRNA ligase from Roseiflexus castenholzii (strain DSM 13941 / HLO8).